Here is a 471-residue protein sequence, read N- to C-terminus: Adenosylhomocysteinase (471 aa).

Substrate-binding residues include T60, D135, and E196. 197-199 (TTT) is a binding site for NAD(+). Positions 226 and 230 each coordinate substrate. Residues N231, 260 to 265 (GYGDVG), E283, N318, 339 to 341 (IGH), and N387 contribute to the NAD(+) site.

This sequence belongs to the adenosylhomocysteinase family. NAD(+) serves as cofactor.

It is found in the cytoplasm. It catalyses the reaction S-adenosyl-L-homocysteine + H2O = L-homocysteine + adenosine. The protein operates within amino-acid biosynthesis; L-homocysteine biosynthesis; L-homocysteine from S-adenosyl-L-homocysteine: step 1/1. In terms of biological role, may play a key role in the regulation of the intracellular concentration of adenosylhomocysteine. In Chlorobium phaeovibrioides (strain DSM 265 / 1930) (Prosthecochloris vibrioformis (strain DSM 265)), this protein is Adenosylhomocysteinase.